The chain runs to 660 residues: E3 ubiquitin-protein ligase ORTHRUS 3 (660 aa).

Residues 12-63 (EGVCMRCKSMPPPEESLTCGTCVTPWHVSCLLSPPETLSATLQWLCPDCSGE) form a PHD-type zinc finger. The segment at 107 to 129 (QLLSGKGVVDEDDEEEKKKTSKG) is disordered. The segment at 141 to 197 (CSFCMQSLQKPVSVRVLFALALMLVWFLESTPCGHNACLKCFLKWMGQGHRSCGTCR) adopts an RING-type 1 zinc-finger fold. In terms of domain architecture, YDG spans 285-434 (VRNQGLLVGE…CRFLFVRCDN (150 aa)). The segment at 528 to 585 (CQICQKVMTNPVTTPCAHNFCKACLESKFAGTALVRERGSGGRKLRSQKSVMKCPCCP) adopts an RING-type 2 zinc-finger fold. Residues 593 to 622 (QNPQVNREVAEVIEKLKKQEEEENAKSLDE) adopt a coiled-coil conformation. Composition is skewed to basic and acidic residues over residues 610–621 (KQEEEENAKSLD) and 637–646 (QPKKRIKLDT). The tract at residues 610 to 660 (KQEEEENAKSLDEGQCSGTSHEEEDDEQPKKRIKLDTDAEVSATVVESDMK) is disordered.

It is found in the nucleus. The enzyme catalyses S-ubiquitinyl-[E2 ubiquitin-conjugating enzyme]-L-cysteine + [acceptor protein]-L-lysine = [E2 ubiquitin-conjugating enzyme]-L-cysteine + N(6)-ubiquitinyl-[acceptor protein]-L-lysine.. It functions in the pathway protein modification; protein ubiquitination. In terms of biological role, E3 ubiquitin-protein ligase. May participate in CpG methylation-dependent transcriptional regulation. This is E3 ubiquitin-protein ligase ORTHRUS 3 (ORTH3) from Arabidopsis thaliana (Mouse-ear cress).